A 154-amino-acid polypeptide reads, in one-letter code: 3-hydroxyacyl-[acyl-carrier-protein] dehydratase FabZ (154 aa).

The active site involves H54.

It belongs to the thioester dehydratase family. FabZ subfamily.

It is found in the cytoplasm. It catalyses the reaction a (3R)-hydroxyacyl-[ACP] = a (2E)-enoyl-[ACP] + H2O. In terms of biological role, involved in unsaturated fatty acids biosynthesis. Catalyzes the dehydration of short chain beta-hydroxyacyl-ACPs and long chain saturated and unsaturated beta-hydroxyacyl-ACPs. This chain is 3-hydroxyacyl-[acyl-carrier-protein] dehydratase FabZ, found in Shewanella oneidensis (strain ATCC 700550 / JCM 31522 / CIP 106686 / LMG 19005 / NCIMB 14063 / MR-1).